We begin with the raw amino-acid sequence, 156 residues long: Ribosomal RNA large subunit methyltransferase H (156 aa).

Residues leucine 73, glycine 104, and leucine 123 to leucine 128 contribute to the S-adenosyl-L-methionine site.

This sequence belongs to the RNA methyltransferase RlmH family. Homodimer.

Its subcellular location is the cytoplasm. It catalyses the reaction pseudouridine(1915) in 23S rRNA + S-adenosyl-L-methionine = N(3)-methylpseudouridine(1915) in 23S rRNA + S-adenosyl-L-homocysteine + H(+). In terms of biological role, specifically methylates the pseudouridine at position 1915 (m3Psi1915) in 23S rRNA. This Yersinia pseudotuberculosis serotype O:1b (strain IP 31758) protein is Ribosomal RNA large subunit methyltransferase H.